Here is a 294-residue protein sequence, read N- to C-terminus: Protein ATC1/LIC4 (294 aa).

The tract at residues Tyr114–Asn178 is disordered. The span at His130 to Thr145 shows a compositional bias: basic and acidic residues. Residues Leu153–Ser175 are compositionally biased toward low complexity.

It localises to the cytoplasm. The protein resides in the nucleus. In terms of biological role, involved in cation homeostasis and in the regulation of the cation stress signaling cascades. Also involved in bipolar budding. The protein is Protein ATC1/LIC4 (ATC1) of Saccharomyces cerevisiae (strain ATCC 204508 / S288c) (Baker's yeast).